A 408-amino-acid polypeptide reads, in one-letter code: BRCA1-A complex subunit Abraxas 1 (408 aa).

In terms of domain architecture, MPN spans 7 to 155 (TAVISGFVFG…KSTHRLEYAL (149 aa)). Residues 210–272 (ALAEVNRISD…MEEKGNKVSE (63 aa)) are a coiled coil. Positions 335–408 (HRRQAGKRKA…EVSRSKSPTF (74 aa)) are disordered. Residues 337–358 (RQAGKRKAHSKQLGKTSTKKSR) are compositionally biased toward basic residues. The segment covering 394 to 408 (QSLNVEVSRSKSPTF) has biased composition (polar residues). Serine 405 carries the post-translational modification Phosphoserine. The pSXXF motif motif lies at 405–408 (SPTF).

This sequence belongs to the FAM175 family. Abraxas subfamily. As to quaternary structure, component of the BRCA1-A complex. Component of the BRISC complex. Homodimer. Interacts directly (when phosphorylated at Ser-405) with brca1. The phosphorylated homodimer can interact directly with two brca1 chains, giving rise to a heterotetramer. Post-translationally, phosphorylation of Ser-405 of the pSXXF motif by ATM or ATR constitutes a specific recognition motif for the BRCT domain of BRCA1.

It is found in the nucleus. Functionally, involved in DNA damage response and double-strand break (DSB) repair. Component of the BRCA1-A complex, acting as a central scaffold protein that assembles the various components of the complex and mediates the recruitment of brca1. The BRCA1-A complex specifically recognizes 'Lys-63'-linked ubiquitinated histones H2A and H2AX at DNA lesion sites, leading to target the brca1-bard1 heterodimer to sites of DNA damage at DSBs. This complex also possesses deubiquitinase activity that specifically removes 'Lys-63'-linked ubiquitin on histones H2A and H2AX. This Xenopus laevis (African clawed frog) protein is BRCA1-A complex subunit Abraxas 1.